The primary structure comprises 258 residues: Shikimate dehydrogenase (NADP(+)) (258 aa).

Shikimate is bound by residues 14–16 (SES) and Thr61. The Proton acceptor role is filled by Lys65. Shikimate contacts are provided by Asn86 and Asp101. Residues 125 to 129 (GSGGS) and Leu211 contribute to the NADP(+) site. Tyr213 provides a ligand contact to shikimate. Gly234 contacts NADP(+).

The protein belongs to the shikimate dehydrogenase family. As to quaternary structure, homodimer.

The enzyme catalyses shikimate + NADP(+) = 3-dehydroshikimate + NADPH + H(+). It functions in the pathway metabolic intermediate biosynthesis; chorismate biosynthesis; chorismate from D-erythrose 4-phosphate and phosphoenolpyruvate: step 4/7. Its function is as follows. Involved in the biosynthesis of the chorismate, which leads to the biosynthesis of aromatic amino acids. Catalyzes the reversible NADPH linked reduction of 3-dehydroshikimate (DHSA) to yield shikimate (SA). The polypeptide is Shikimate dehydrogenase (NADP(+)) (Clostridium botulinum (strain Loch Maree / Type A3)).